Reading from the N-terminus, the 70-residue chain is Small ribosomal subunit protein bS21 (70 aa).

This sequence belongs to the bacterial ribosomal protein bS21 family.

The sequence is that of Small ribosomal subunit protein bS21 from Neisseria gonorrhoeae (strain ATCC 700825 / FA 1090).